The primary structure comprises 313 residues: Porphobilinogen deaminase (313 aa).

Position 242 is an S-(dipyrrolylmethanemethyl)cysteine (Cys-242).

This sequence belongs to the HMBS family. As to quaternary structure, monomer. Dipyrromethane is required as a cofactor.

The catalysed reaction is 4 porphobilinogen + H2O = hydroxymethylbilane + 4 NH4(+). It functions in the pathway porphyrin-containing compound metabolism; protoporphyrin-IX biosynthesis; coproporphyrinogen-III from 5-aminolevulinate: step 2/4. Tetrapolymerization of the monopyrrole PBG into the hydroxymethylbilane pre-uroporphyrinogen in several discrete steps. The chain is Porphobilinogen deaminase from Pseudomonas syringae pv. tomato (strain ATCC BAA-871 / DC3000).